We begin with the raw amino-acid sequence, 396 residues long: F-box protein At2g21930 (396 aa).

The F-box domain occupies 19 to 65 (SGNSVQIPFDLIPEILKRLPVKTLARFLSVSKEYTSIIRNRDFMKSY).

The chain is F-box protein At2g21930 from Arabidopsis thaliana (Mouse-ear cress).